We begin with the raw amino-acid sequence, 417 residues long: MFSKQDQIQGYDDALLSAMNAEEQRQEDHIELIASENYTSKRVMQAQGSGLTNKYAEGYPGKRYYGGCEHVDKVEQLAIERAKQLFGADYANVQPHSGSQANAAVYLALLQAGDTVLGMSLAHGGHLTHGAKVSFSGKLYNAVQYGIDTTTGLIDYDEVERIAVECQPKMIIAGFSAYSKTLDFPRFREIADKVGAYLFVDMAHVAGLVAAGLYPNPLPYADVVTTTTHKTLRGPRGGLILAKANEELEKKFNSAVFPGGQGGPLMHVIAAKAVCFKEAMEPGFKAYQQQVIDNAQAMAQVFIDRGFDVVSGGTDNHLFLVSLIRQGLTGKDADAALGRAHITVNKNSVPNDPQSPFVTSGLRIGTPAVTTRGFKVTQCVELAGWICDILDNLGDADVEANVASQVAALCADFPVYR.

(6S)-5,6,7,8-tetrahydrofolate is bound by residues leucine 121 and 125–127; that span reads GHL. An N6-(pyridoxal phosphate)lysine modification is found at lysine 230. Position 355-357 (355-357) interacts with (6S)-5,6,7,8-tetrahydrofolate; it reads SPF.

It belongs to the SHMT family. Homodimer. Pyridoxal 5'-phosphate serves as cofactor.

It localises to the cytoplasm. It carries out the reaction (6R)-5,10-methylene-5,6,7,8-tetrahydrofolate + glycine + H2O = (6S)-5,6,7,8-tetrahydrofolate + L-serine. It participates in one-carbon metabolism; tetrahydrofolate interconversion. Its pathway is amino-acid biosynthesis; glycine biosynthesis; glycine from L-serine: step 1/1. Functionally, catalyzes the reversible interconversion of serine and glycine with tetrahydrofolate (THF) serving as the one-carbon carrier. This reaction serves as the major source of one-carbon groups required for the biosynthesis of purines, thymidylate, methionine, and other important biomolecules. Also exhibits THF-independent aldolase activity toward beta-hydroxyamino acids, producing glycine and aldehydes, via a retro-aldol mechanism. The protein is Serine hydroxymethyltransferase 2 of Pseudomonas savastanoi pv. phaseolicola (strain 1448A / Race 6) (Pseudomonas syringae pv. phaseolicola (strain 1448A / Race 6)).